We begin with the raw amino-acid sequence, 678 residues long: Protein KHNYN (678 aa).

A Phosphoserine modification is found at Ser-10. Disordered stretches follow at residues 222-251 and 347-407; these read QGVRAPPSDGRESLDTGSMGPGDCRGARGD and LHNG…ARGG. A compositionally biased stretch (pro residues) spans 355 to 367; that stretch reads PRVPSPPPAPEPP. The residue at position 359 (Ser-359) is a Phosphoserine. Basic and acidic residues predominate over residues 370 to 388; the sequence is CGDRGDCGDRGDVGDRGDK. The region spanning 437 to 589 is the RNase NYN domain; that stretch reads LRHIVIDGSN…LGRNGPTLDE (153 aa). Positions 595-633 are disordered; the sequence is ARTQGSSKAQHPSRGFAEHGKQQQGREEEKGSGGIRKTR. A compositionally biased stretch (basic and acidic residues) spans 610 to 633; it reads FAEHGKQQQGREEEKGSGGIRKTR.

This sequence belongs to the N4BP1 family.

In Homo sapiens (Human), this protein is Protein KHNYN (KHNYN).